We begin with the raw amino-acid sequence, 146 residues long: DNA-directed RNA polymerases II, IV and V subunit 8B (146 aa).

It belongs to the eukaryotic RPB8 RNA polymerase subunit family. Component of the RNA polymerase II, IV and V complexes. Associates with the mediator complex.

Its subcellular location is the nucleus. Functionally, DNA-dependent RNA polymerase catalyzes the transcription of DNA into RNA using the four ribonucleoside triphosphates as substrates. Component of RNA polymerase II which synthesizes mRNA precursors and many functional non-coding RNAs. Pol II is the central component of the basal RNA polymerase II transcription machinery. It is composed of mobile elements that move relative to each other. Component of RNA polymerases IV and V which mediate short-interfering RNAs (siRNA) accumulation and subsequent RNA-directed DNA methylation-dependent (RdDM) transcriptional gene silencing (TGS) of endogenous repeated sequences, including transposable elements. The chain is DNA-directed RNA polymerases II, IV and V subunit 8B (NRPB8B) from Arabidopsis thaliana (Mouse-ear cress).